The sequence spans 206 residues: Elongation factor Ts (206 aa).

Positions 81–84 (TDFV) are involved in Mg(2+) ion dislocation from EF-Tu.

This sequence belongs to the EF-Ts family.

It is found in the cytoplasm. Its function is as follows. Associates with the EF-Tu.GDP complex and induces the exchange of GDP to GTP. It remains bound to the aminoacyl-tRNA.EF-Tu.GTP complex up to the GTP hydrolysis stage on the ribosome. In Maridesulfovibrio salexigens (strain ATCC 14822 / DSM 2638 / NCIMB 8403 / VKM B-1763) (Desulfovibrio salexigens), this protein is Elongation factor Ts.